The sequence spans 395 residues: Chorismate synthase (395 aa).

It belongs to the chorismate synthase family. In terms of assembly, homotetramer. FMNH2 is required as a cofactor.

The enzyme catalyses 5-O-(1-carboxyvinyl)-3-phosphoshikimate = chorismate + phosphate. It participates in metabolic intermediate biosynthesis; chorismate biosynthesis; chorismate from D-erythrose 4-phosphate and phosphoenolpyruvate: step 7/7. The protein is Chorismate synthase of Schizosaccharomyces pombe (strain 972 / ATCC 24843) (Fission yeast).